Consider the following 190-residue polypeptide: Shikimate kinase (190 aa).

Residue 22–27 (GSGKST) coordinates ATP. Residue S26 coordinates Mg(2+). Residues D44, R68, and G90 each coordinate substrate. R127 serves as a coordination point for ATP. Substrate is bound at residue R146.

The protein belongs to the shikimate kinase family. Monomer. It depends on Mg(2+) as a cofactor.

The protein localises to the cytoplasm. The catalysed reaction is shikimate + ATP = 3-phosphoshikimate + ADP + H(+). It participates in metabolic intermediate biosynthesis; chorismate biosynthesis; chorismate from D-erythrose 4-phosphate and phosphoenolpyruvate: step 5/7. Functionally, catalyzes the specific phosphorylation of the 3-hydroxyl group of shikimic acid using ATP as a cosubstrate. This is Shikimate kinase from Microcystis aeruginosa (strain NIES-843 / IAM M-2473).